A 482-amino-acid chain; its full sequence is 2-succinylbenzoate--CoA ligase (482 aa).

Belongs to the ATP-dependent AMP-binding enzyme family. MenE subfamily.

The catalysed reaction is 2-succinylbenzoate + ATP + CoA = 2-succinylbenzoyl-CoA + AMP + diphosphate. It participates in quinol/quinone metabolism; 1,4-dihydroxy-2-naphthoate biosynthesis; 1,4-dihydroxy-2-naphthoate from chorismate: step 5/7. Its pathway is quinol/quinone metabolism; menaquinone biosynthesis. Its function is as follows. Converts 2-succinylbenzoate (OSB) to 2-succinylbenzoyl-CoA (OSB-CoA). The protein is 2-succinylbenzoate--CoA ligase of Bacillus anthracis (strain A0248).